Here is a 147-residue protein sequence, read N- to C-terminus: Hemoglobin subunit beta (147 aa).

Position 2 is an N-acetylvaline (Val-2). The Globin domain occupies 3-147 (HLTPEEKNAV…VANALAHKYH (145 aa)). Thr-13 is subject to Phosphothreonine. Ser-45 carries the phosphoserine modification. N6-acetyllysine is present on Lys-60. A heme b-binding site is contributed by His-64. Lys-83 carries the N6-acetyllysine modification. His-93 lines the heme b pocket. The residue at position 94 (Cys-94) is an S-nitrosocysteine. Lys-145 is modified (N6-acetyllysine).

Belongs to the globin family. As to quaternary structure, heterotetramer of two alpha chains and two beta chains. As to expression, red blood cells.

Its function is as follows. Involved in oxygen transport from the lung to the various peripheral tissues. The chain is Hemoglobin subunit beta (HBB) from Papio anubis (Olive baboon).